The primary structure comprises 518 residues: Putative Rieske 2Fe-2S iron-sulfur protein MSMEG_6410/MSMEI_6242 (518 aa).

Lys-375 is covalently cross-linked (Isoglutamyl lysine isopeptide (Lys-Gln) (interchain with Q-Cter in protein Pup)). A Rieske domain is found at 431-518 (LYTFFKCLTD…KGHELRCQKL (88 aa)). [2Fe-2S] cluster contacts are provided by Cys-471, His-473, Cys-491, and His-494.

The cofactor is [2Fe-2S] cluster.

This is Putative Rieske 2Fe-2S iron-sulfur protein MSMEG_6410/MSMEI_6242 from Mycolicibacterium smegmatis (strain ATCC 700084 / mc(2)155) (Mycobacterium smegmatis).